Reading from the N-terminus, the 274-residue chain is Isoprenyl transferase (274 aa).

D49 is an active-site residue. D49 lines the Mg(2+) pocket. Residues 50–53, F54, R62, H66, and 94–96 contribute to the substrate site; these read GNRR and STD. The Proton acceptor role is filled by N97. Residues R100, R223, and 229 to 231 each bind substrate; that span reads RLS. E242 is a binding site for Mg(2+).

This sequence belongs to the UPP synthase family. In terms of assembly, homodimer. Requires Mg(2+) as cofactor.

Functionally, catalyzes the condensation of isopentenyl diphosphate (IPP) with allylic pyrophosphates generating different type of terpenoids. In Deinococcus radiodurans (strain ATCC 13939 / DSM 20539 / JCM 16871 / CCUG 27074 / LMG 4051 / NBRC 15346 / NCIMB 9279 / VKM B-1422 / R1), this protein is Isoprenyl transferase.